Here is a 422-residue protein sequence, read N- to C-terminus: L-threonine dehydratase biosynthetic IlvA (422 aa).

Lysine 60 carries the N6-(pyridoxal phosphate)lysine modification. Pyridoxal 5'-phosphate is bound by residues asparagine 87, 190 to 194 (GGGGL), and serine 315. Residues 339-413 (HYFIVNFPQR…KPFHYVEVNK (75 aa)) form the ACT-like domain.

It belongs to the serine/threonine dehydratase family. Homotetramer. Pyridoxal 5'-phosphate serves as cofactor.

The enzyme catalyses L-threonine = 2-oxobutanoate + NH4(+). Its pathway is amino-acid biosynthesis; L-isoleucine biosynthesis; 2-oxobutanoate from L-threonine: step 1/1. Its function is as follows. Catalyzes the anaerobic formation of alpha-ketobutyrate and ammonia from threonine in a two-step reaction. The first step involved a dehydration of threonine and a production of enamine intermediates (aminocrotonate), which tautomerizes to its imine form (iminobutyrate). Both intermediates are unstable and short-lived. The second step is the nonenzymatic hydrolysis of the enamine/imine intermediates to form 2-ketobutyrate and free ammonia. In the low water environment of the cell, the second step is accelerated by RidA. The polypeptide is L-threonine dehydratase biosynthetic IlvA (ilvA) (Bacillus subtilis (strain 168)).